The chain runs to 223 residues: Phosphoribosylformylglycinamidine synthase subunit PurQ (223 aa).

The Glutamine amidotransferase type-1 domain occupies phenylalanine 3–valine 223. The active-site Nucleophile is cysteine 85. Residues histidine 193 and glutamate 195 contribute to the active site.

In terms of assembly, part of the FGAM synthase complex composed of 1 PurL, 1 PurQ and 2 PurS subunits.

The protein resides in the cytoplasm. The catalysed reaction is N(2)-formyl-N(1)-(5-phospho-beta-D-ribosyl)glycinamide + L-glutamine + ATP + H2O = 2-formamido-N(1)-(5-O-phospho-beta-D-ribosyl)acetamidine + L-glutamate + ADP + phosphate + H(+). It catalyses the reaction L-glutamine + H2O = L-glutamate + NH4(+). It participates in purine metabolism; IMP biosynthesis via de novo pathway; 5-amino-1-(5-phospho-D-ribosyl)imidazole from N(2)-formyl-N(1)-(5-phospho-D-ribosyl)glycinamide: step 1/2. Its function is as follows. Part of the phosphoribosylformylglycinamidine synthase complex involved in the purines biosynthetic pathway. Catalyzes the ATP-dependent conversion of formylglycinamide ribonucleotide (FGAR) and glutamine to yield formylglycinamidine ribonucleotide (FGAM) and glutamate. The FGAM synthase complex is composed of three subunits. PurQ produces an ammonia molecule by converting glutamine to glutamate. PurL transfers the ammonia molecule to FGAR to form FGAM in an ATP-dependent manner. PurS interacts with PurQ and PurL and is thought to assist in the transfer of the ammonia molecule from PurQ to PurL. The sequence is that of Phosphoribosylformylglycinamidine synthase subunit PurQ from Staphylococcus epidermidis (strain ATCC 35984 / DSM 28319 / BCRC 17069 / CCUG 31568 / BM 3577 / RP62A).